Here is a 125-residue protein sequence, read N- to C-terminus: Small ribosomal subunit protein uS12m (125 aa).

It belongs to the universal ribosomal protein uS12 family.

The protein localises to the mitochondrion. Its function is as follows. Protein S12 is involved in the translation initiation step. The polypeptide is Small ribosomal subunit protein uS12m (RPS12) (Allium cepa (Onion)).